The following is a 464-amino-acid chain: Chitobiosyldiphosphodolichol beta-mannosyltransferase (464 aa).

The Lumenal portion of the chain corresponds to 1 to 2 (MA). Residues 3–23 (ASCLVLLALCLLLPLLLLGGW) traverse the membrane as a helical segment. The Cytoplasmic portion of the chain corresponds to 24–99 (KRWRRGRTAR…ELQSLAVGPR (76 aa)). Residues 100 to 120 (VFQYGVKVVFQAMYLLWKLMW) constitute an intramembrane region (helical). The Cytoplasmic segment spans residues 121–464 (REPGAYIFLQ…QTVLPLVMDT (344 aa)). A Phosphoserine modification is found at serine 242. The tract at residues 242 to 261 (SPFRARSEPEDPATERSAFT) is disordered.

Belongs to the glycosyltransferase group 1 family. Glycosyltransferase 33 subfamily.

The protein localises to the endoplasmic reticulum membrane. The catalysed reaction is an N,N'-diacetylchitobiosyl-diphospho-di-trans,poly-cis-dolichol + GDP-alpha-D-mannose = a beta-D-Man-(1-&gt;4)-beta-D-GlcNAc-(1-&gt;4)-alpha-D-GlcNAc-diphospho-di-trans,poly-cis-dolichol + GDP + H(+). It participates in protein modification; protein glycosylation. In terms of biological role, mannosyltransferase that operates in the biosynthetic pathway of dolichol-linked oligosaccharides, the glycan precursors employed in protein asparagine (N)-glycosylation. The assembly of dolichol-linked oligosaccharides begins on the cytosolic side of the endoplasmic reticulum membrane and finishes in its lumen. The sequential addition of sugars to dolichol pyrophosphate produces dolichol-linked oligosaccharides containing fourteen sugars, including two GlcNAcs, nine mannoses and three glucoses. Once assembled, the oligosaccharide is transferred from the lipid to nascent proteins by oligosaccharyltransferases. Catalyzes, on the cytoplasmic face of the endoplasmic reticulum, the addition of the first mannose residues to the dolichol-linked oligosaccharide chain, to produce Man1GlcNAc(2)-PP-dolichol core oligosaccharide. Man1GlcNAc(2)-PP-dolichol is a substrate for ALG2, the following enzyme in the biosynthetic pathway. The chain is Chitobiosyldiphosphodolichol beta-mannosyltransferase from Pongo abelii (Sumatran orangutan).